The primary structure comprises 214 residues: Nascent polypeptide-associated complex subunit alpha (214 aa).

The segment at 1 to 80 (MPGEATETVP…SEKKARKAMS (80 aa)) is disordered. Acidic residues predominate over residues 29–40 (SDSDDSPPELEQ). A compositionally biased stretch (low complexity) spans 41-56 (DSTQTTTQQAQLAAAA). Residues 69–134 (SRSEKKARKA…AKIEDLSQQA (66 aa)) enclose the NAC-A/B domain. Positions 175-212 (VEVKDIELVMSQANVSRAKAVRALKNNSNDIVNAIMEL) constitute a UBA domain.

The protein belongs to the NAC-alpha family.

Functionally, may promote appropriate targeting of ribosome-nascent polypeptide complexes. This chain is Nascent polypeptide-associated complex subunit alpha (naca), found in Xenopus tropicalis (Western clawed frog).